The chain runs to 173 residues: Large ribosomal subunit protein bL9 (173 aa).

The disordered stretch occupies residues 151-173; sequence YDDTPDRTETEESTKELQEEHAE.

This sequence belongs to the bacterial ribosomal protein bL9 family.

Its function is as follows. Binds to the 23S rRNA. This Lawsonia intracellularis (strain PHE/MN1-00) protein is Large ribosomal subunit protein bL9.